The chain runs to 287 residues: Ret finger protein-like 4A (287 aa).

Residues 11-53 form an RING-type; degenerate zinc finger; that stretch reads CPVCLKDLEEAVQLKCGYACCLQCLNSLQKEPDGEGLLCRFCS. Residues 78-276 enclose the B30.2/SPRY domain; the sequence is EPKLKSVLTM…LSICSVINPS (199 aa).

Interacts with PSMB1, UBE2A and CCNB1.

It localises to the cytoplasm. The protein localises to the nucleus. The chain is Ret finger protein-like 4A (RFPL4A) from Homo sapiens (Human).